The following is a 109-amino-acid chain: uncharacterized protein (109 aa).

Residues 67–96 (YFGNKLWRPTPRSGQSGQSRPKTGPHGSQR) are disordered. A compositionally biased stretch (polar residues) spans 78–87 (RSGQSGQSRP).

This is an uncharacterized protein from Saccharomyces cerevisiae (strain ATCC 204508 / S288c) (Baker's yeast).